Reading from the N-terminus, the 805-residue chain is Leucine--tRNA ligase (805 aa).

Positions 40 to 51 (PYPSGSGLHVGH) match the 'HIGH' region motif. The short motif at 576 to 580 (KMSKS) is the 'KMSKS' region element. An ATP-binding site is contributed by lysine 579.

Belongs to the class-I aminoacyl-tRNA synthetase family.

It is found in the cytoplasm. The catalysed reaction is tRNA(Leu) + L-leucine + ATP = L-leucyl-tRNA(Leu) + AMP + diphosphate. The protein is Leucine--tRNA ligase of Chloroherpeton thalassium (strain ATCC 35110 / GB-78).